Consider the following 1083-residue polypeptide: Error-prone DNA polymerase (1083 aa).

It belongs to the DNA polymerase type-C family. DnaE2 subfamily.

The protein localises to the cytoplasm. The enzyme catalyses DNA(n) + a 2'-deoxyribonucleoside 5'-triphosphate = DNA(n+1) + diphosphate. DNA polymerase involved in damage-induced mutagenesis and translesion synthesis (TLS). It is not the major replicative DNA polymerase. The sequence is that of Error-prone DNA polymerase from Xanthomonas oryzae pv. oryzae (strain PXO99A).